The following is a 308-amino-acid chain: Porphobilinogen deaminase (308 aa).

Residue Cys-241 is modified to S-(dipyrrolylmethanemethyl)cysteine.

This sequence belongs to the HMBS family. Monomer. Requires dipyrromethane as cofactor.

It catalyses the reaction 4 porphobilinogen + H2O = hydroxymethylbilane + 4 NH4(+). It functions in the pathway porphyrin-containing compound metabolism; protoporphyrin-IX biosynthesis; coproporphyrinogen-III from 5-aminolevulinate: step 2/4. Functionally, tetrapolymerization of the monopyrrole PBG into the hydroxymethylbilane pre-uroporphyrinogen in several discrete steps. This Exiguobacterium sibiricum (strain DSM 17290 / CCUG 55495 / CIP 109462 / JCM 13490 / 255-15) protein is Porphobilinogen deaminase.